Consider the following 664-residue polypeptide: UvrABC system protein B (664 aa).

The Helicase ATP-binding domain maps to 23–180 (EGLNRGMRFQ…ERLARIGYQR (158 aa)). Residue 36-43 (GVTGSGKT) participates in ATP binding. A Beta-hairpin motif is present at residues 89–112 (YYDYYQPEAYIPTKDLYIEKNADI). Residues 429–588 (DLVNEIVKVK…ITPRSVIKPL (160 aa)) form the Helicase C-terminal domain. The UVR domain maps to 622–657 (EEYMAVLEEEMYRAASELRYEDAAALRDELFRIREE).

Belongs to the UvrB family. Forms a heterotetramer with UvrA during the search for lesions. Interacts with UvrC in an incision complex.

It is found in the cytoplasm. Functionally, the UvrABC repair system catalyzes the recognition and processing of DNA lesions. A damage recognition complex composed of 2 UvrA and 2 UvrB subunits scans DNA for abnormalities. Upon binding of the UvrA(2)B(2) complex to a putative damaged site, the DNA wraps around one UvrB monomer. DNA wrap is dependent on ATP binding by UvrB and probably causes local melting of the DNA helix, facilitating insertion of UvrB beta-hairpin between the DNA strands. Then UvrB probes one DNA strand for the presence of a lesion. If a lesion is found the UvrA subunits dissociate and the UvrB-DNA preincision complex is formed. This complex is subsequently bound by UvrC and the second UvrB is released. If no lesion is found, the DNA wraps around the other UvrB subunit that will check the other stand for damage. This chain is UvrABC system protein B, found in Thermotoga petrophila (strain ATCC BAA-488 / DSM 13995 / JCM 10881 / RKU-1).